The primary structure comprises 540 residues: Chaperonin GroEL 3 (540 aa).

ATP-binding positions include 30–33 (TLGP), K51, 87–91 (DGTTT), G415, 480–482 (NAA), and D496.

It belongs to the chaperonin (HSP60) family. In terms of assembly, forms a cylinder of 14 subunits composed of two heptameric rings stacked back-to-back. Interacts with the co-chaperonin GroES.

It localises to the cytoplasm. It catalyses the reaction ATP + H2O + a folded polypeptide = ADP + phosphate + an unfolded polypeptide.. Together with its co-chaperonin GroES, plays an essential role in assisting protein folding. The GroEL-GroES system forms a nano-cage that allows encapsulation of the non-native substrate proteins and provides a physical environment optimized to promote and accelerate protein folding. This is Chaperonin GroEL 3 from Bradyrhizobium sp. (strain BTAi1 / ATCC BAA-1182).